The sequence spans 145 residues: UPF0260 protein VV2402 (145 aa).

The protein belongs to the UPF0260 family.

This is UPF0260 protein VV2402 from Vibrio vulnificus (strain YJ016).